The chain runs to 106 residues: Large ribosomal subunit protein eL42 (106 aa).

Belongs to the eukaryotic ribosomal protein eL42 family.

It localises to the cytoplasm. This Trypanosoma brucei brucei protein is Large ribosomal subunit protein eL42 (RPL44).